The following is a 188-amino-acid chain: Nicotinamide-nucleotide adenylyltransferase (188 aa).

Residues 166-188 (SDSLERYAATGESLPESLDDLDD) form a disordered region.

Belongs to the archaeal NMN adenylyltransferase family.

It localises to the cytoplasm. The catalysed reaction is beta-nicotinamide D-ribonucleotide + ATP + H(+) = diphosphate + NAD(+). It participates in cofactor biosynthesis; NAD(+) biosynthesis; NAD(+) from nicotinamide D-ribonucleotide: step 1/1. This Haloarcula marismortui (strain ATCC 43049 / DSM 3752 / JCM 8966 / VKM B-1809) (Halobacterium marismortui) protein is Nicotinamide-nucleotide adenylyltransferase.